We begin with the raw amino-acid sequence, 513 residues long: Probable DNA ligase (513 aa).

An ATP-binding site is contributed by Glu215. Lys217 acts as the N6-AMP-lysine intermediate in catalysis. Residues Arg222, Arg237, Glu266, Phe306, Arg378, and Lys384 each contribute to the ATP site.

This sequence belongs to the ATP-dependent DNA ligase family. It depends on Mg(2+) as a cofactor.

It carries out the reaction ATP + (deoxyribonucleotide)n-3'-hydroxyl + 5'-phospho-(deoxyribonucleotide)m = (deoxyribonucleotide)n+m + AMP + diphosphate.. Functionally, DNA ligase that seals nicks in double-stranded DNA during DNA replication, DNA recombination and DNA repair. In Mycobacterium marinum (strain ATCC BAA-535 / M), this protein is Probable DNA ligase.